A 294-amino-acid chain; its full sequence is 4-hydroxy-tetrahydrodipicolinate synthase (294 aa).

A pyruvate-binding site is contributed by Thr-47. The active-site Proton donor/acceptor is the Tyr-135. Lys-163 (schiff-base intermediate with substrate) is an active-site residue. Ile-206 is a pyruvate binding site.

The protein belongs to the DapA family. Homodimer.

It localises to the cytoplasm. The catalysed reaction is L-aspartate 4-semialdehyde + pyruvate = (2S,4S)-4-hydroxy-2,3,4,5-tetrahydrodipicolinate + H2O + H(+). It functions in the pathway amino-acid biosynthesis; L-lysine biosynthesis via DAP pathway; (S)-tetrahydrodipicolinate from L-aspartate: step 3/4. Functionally, catalyzes the condensation of (S)-aspartate-beta-semialdehyde [(S)-ASA] and pyruvate to 4-hydroxy-tetrahydrodipicolinate (HTPA). This Staphylococcus haemolyticus (strain JCSC1435) protein is 4-hydroxy-tetrahydrodipicolinate synthase.